A 166-amino-acid polypeptide reads, in one-letter code: Ureidoglycolate lyase (166 aa).

Belongs to the ureidoglycolate lyase family. In terms of assembly, homodimer. The cofactor is Ni(2+).

It carries out the reaction (S)-ureidoglycolate = urea + glyoxylate. The protein operates within nitrogen metabolism; (S)-allantoin degradation. In terms of biological role, catalyzes the catabolism of the allantoin degradation intermediate (S)-ureidoglycolate, generating urea and glyoxylate. Involved in the utilization of allantoin as nitrogen source. This chain is Ureidoglycolate lyase, found in Rhizobium etli (strain ATCC 51251 / DSM 11541 / JCM 21823 / NBRC 15573 / CFN 42).